Here is a 233-residue protein sequence, read N- to C-terminus: Probable O-methyltransferase Rv1703c (233 aa).

S-adenosyl-L-methionine contacts are provided by residues V55, E77, 79-80 (GT), and E102. D157 is an a divalent metal cation binding site. D159 serves as a coordination point for S-adenosyl-L-methionine. The a divalent metal cation site is built by D185 and N186.

It belongs to the class I-like SAM-binding methyltransferase superfamily. Cation-dependent O-methyltransferase family.

Functionally, specifically methylates an O atom of its substrate. This Mycobacterium tuberculosis (strain ATCC 25618 / H37Rv) protein is Probable O-methyltransferase Rv1703c.